The following is a 457-amino-acid chain: PDZ and LIM domain protein 7 (457 aa).

The region spanning 1–85 (MDSFKVVLEG…RLSLGLSRAQ (85 aa)) is the PDZ domain. The residue at position 78 (Ser78) is a Phosphoserine. Disordered stretches follow at residues 81–132 (LSRA…LSQN) and 186–226 (FMKK…PWAV). A Phosphothreonine modification is found at Thr96. Arg103 bears the Asymmetric dimethylarginine mark. Ser111 carries the post-translational modification Phosphoserine. The residue at position 247 (Ser247) is a Phosphoserine. LIM zinc-binding domains lie at 280-338 (PVCH…VRYA), 339-398 (PSCA…MFGT), and 399-457 (KCRG…FSHV).

As to quaternary structure, binds via its LIM zinc-binding 3 domain (LIM 3) domain to endocytic codes of INSR, but not with those of IGF1R, LDLR, TFRC, or EGFR. Interacts with various PKC isoforms through the LIM zinc-binding domains. Binds to RET in a phosphorylation-independent manner via its LIM zinc-binding 2 domain (LIM 2). Probably part of a complex with SHC and the RET dimer. Interacts with TPM2, TBX4 and TBX5. Interacts (via LIM domains) with SIPA1L1. As to expression, expressed in kidney, heart, brain, lung, and skeletal muscle. Overexpression results in the synthesis of an unidentified soluble factor which acts on cells in the osteoblast lineage causing them to differentiate and secrete BMP-2.

It localises to the cytoplasm. It is found in the cytoskeleton. May function as a scaffold on which the coordinated assembly of proteins can occur. May play a role as an adapter that, via its PDZ domain, localizes LIM-binding proteins to actin filaments of both skeletal muscle and nonmuscle tissues. Involved in both of the two fundamental mechanisms of bone formation, direct bone formation (e.g. embryonic flat bones mandible and cranium), and endochondral bone formation (e.g. embryonic long bone development). Plays a role during fracture repair. Involved in BMP6 signaling pathway. In Rattus norvegicus (Rat), this protein is PDZ and LIM domain protein 7 (Pdlim7).